Here is an 85-residue protein sequence, read N- to C-terminus: Large ribosomal subunit protein bL27 (85 aa).

Residues 1 to 20 form a disordered region; it reads MAHKKAGGSSRNGRDSEAKR.

This sequence belongs to the bacterial ribosomal protein bL27 family.

The protein is Large ribosomal subunit protein bL27 of Aeromonas salmonicida (strain A449).